We begin with the raw amino-acid sequence, 490 residues long: Cytochrome P450 2C26 (490 aa).

A heme-binding site is contributed by Cys-435.

Belongs to the cytochrome P450 family. Requires heme as cofactor.

It localises to the endoplasmic reticulum membrane. It is found in the microsome membrane. The enzyme catalyses an organic molecule + reduced [NADPH--hemoprotein reductase] + O2 = an alcohol + oxidized [NADPH--hemoprotein reductase] + H2O + H(+). Functionally, catalyzes the hydroxylation of tolbutamide and the N-demethylation of aminopyrine and benzphetamine. This chain is Cytochrome P450 2C26 (CYP2C26), found in Mesocricetus auratus (Golden hamster).